Reading from the N-terminus, the 266-residue chain is Na(+)-translocating NADH-quinone reductase subunit C (266 aa).

The helical transmembrane segment at 16–36 (LLVVVILCLVCSVVVAGAAVG) threads the bilayer. Thr232 bears the FMN phosphoryl threonine mark.

Belongs to the NqrC family. In terms of assembly, composed of six subunits; NqrA, NqrB, NqrC, NqrD, NqrE and NqrF. FMN is required as a cofactor.

It is found in the cell inner membrane. The enzyme catalyses a ubiquinone + n Na(+)(in) + NADH + H(+) = a ubiquinol + n Na(+)(out) + NAD(+). Functionally, NQR complex catalyzes the reduction of ubiquinone-1 to ubiquinol by two successive reactions, coupled with the transport of Na(+) ions from the cytoplasm to the periplasm. NqrA to NqrE are probably involved in the second step, the conversion of ubisemiquinone to ubiquinol. This chain is Na(+)-translocating NADH-quinone reductase subunit C, found in Yersinia pestis.